Consider the following 394-residue polypeptide: Flavohemoprotein (394 aa).

A Globin domain is found at 1–136 (MLSENTINIV…LANVFIQREE (136 aa)). Position 85 (His85) interacts with heme b. Residues Tyr95 and Glu135 each act as charge relay system in the active site. Residues 147–394 (GGWRGLREFE…YECFGPHKVV (248 aa)) form a reductase region. Residues 150 to 255 (RGLREFELVE…AAPAGDFFLD (106 aa)) form the FAD-binding FR-type domain. FAD contacts are provided by residues Tyr188 and 204-207 (RQYS). Residue 268–273 (GVGLTP) coordinates NADP(+). Position 387 to 390 (387 to 390 (CFGP)) interacts with FAD.

It belongs to the globin family. Two-domain flavohemoproteins subfamily. This sequence in the C-terminal section; belongs to the flavoprotein pyridine nucleotide cytochrome reductase family. Heme b is required as a cofactor. FAD serves as cofactor.

The catalysed reaction is 2 nitric oxide + NADPH + 2 O2 = 2 nitrate + NADP(+) + H(+). The enzyme catalyses 2 nitric oxide + NADH + 2 O2 = 2 nitrate + NAD(+) + H(+). In terms of biological role, is involved in NO detoxification in an aerobic process, termed nitric oxide dioxygenase (NOD) reaction that utilizes O(2) and NAD(P)H to convert NO to nitrate, which protects the bacterium from various noxious nitrogen compounds. Therefore, plays a central role in the inducible response to nitrosative stress. The polypeptide is Flavohemoprotein (Vibrio vulnificus (strain CMCP6)).